The chain runs to 239 residues: Bidirectional sugar transporter SWEET8 (239 aa).

The Extracellular portion of the chain corresponds to 1 to 6; it reads MVDAKQ. A helical transmembrane segment spans residues 7–27; it reads VRFIIGVIGNVISFGLFAAPA. Positions 9 to 98 constitute a MtN3/slv 1 domain; the sequence is FIIGVIGNVI…VYLMYCGHKK (90 aa). The Cytoplasmic portion of the chain corresponds to 28–44; it reads KTFWRIFKKKSVEEFSY. The helical transmembrane segment at 45–65 threads the bilayer; that stretch reads VPYVATVMNCMLWVFYGLPVV. The Extracellular segment spans residues 66–69; sequence HKDS. Residues 70–90 traverse the membrane as a helical segment; sequence ILVSTINGVGLVIELFYVGVY. Topologically, residues 91–103 are cytoplasmic; it reads LMYCGHKKNHRRN. The chain crosses the membrane as a helical span at residues 104-124; it reads ILGFLALEVILVVAIILITLF. At 125 to 135 the chain is on the extracellular side; that stretch reads ALKGDFVKQTF. A MtN3/slv 2 domain is found at 134-185; it reads TFVGVICDVFNIAMYGAPSLAIIKVVKTKSVEYMPFLLSLVCFVNAGIWTTY. Residues 136-156 traverse the membrane as a helical segment; sequence VGVICDVFNIAMYGAPSLAII. Over 157 to 168 the chain is Cytoplasmic; the sequence is KVVKTKSVEYMP. A helical membrane pass occupies residues 169–189; the sequence is FLLSLVCFVNAGIWTTYSLIF. The Extracellular portion of the chain corresponds to 190–194; it reads KIDYY. Residues 195 to 215 form a helical membrane-spanning segment; that stretch reads VLASNGIGTFLALSQLIVYFM. At 216-239 the chain is on the cytoplasmic side; it reads YYKSTPKEKTVKPSEVEISATERV.

This sequence belongs to the SWEET sugar transporter family. Forms homooligomers and heterooligomers with SWEET4, SWEET5, SWEET6, SWEET7, SWEET9, SWEET10, SWEET11, SWEET13, SWEET15, SWEET16 and SWEET17. As to expression, expressed in inflorescences, embryo sacs and pollen, and at a lower level in stems. Barely detected in roots, leaves and seedlings.

The protein localises to the cell membrane. In terms of biological role, mediates both low-affinity uptake and efflux of sugar across the plasma membrane. Required, in pollen, for microspore cell integrity and primexine pattern formation. The chain is Bidirectional sugar transporter SWEET8 from Arabidopsis thaliana (Mouse-ear cress).